Reading from the N-terminus, the 356-residue chain is Transcription elongation factor, mitochondrial (356 aa).

A mitochondrion-targeting transit peptide spans 1 to 35 (MTVPSLLLAGGRWRCFPLPLASSLFQALHNSCCRK).

Belongs to the TEFM family. Interacts with POLRMT.

The protein resides in the mitochondrion matrix. It localises to the mitochondrion nucleoid. Functionally, transcription elongation factor which increases mitochondrial RNA polymerase processivity. Regulates transcription of the mitochondrial genome, including genes important for the oxidative phosphorylation machinery. In Bos taurus (Bovine), this protein is Transcription elongation factor, mitochondrial (TEFM).